Reading from the N-terminus, the 644-residue chain is Pentatricopeptide repeat-containing protein At1g12775, mitochondrial (644 aa).

The transit peptide at 1–53 (MVRMMIRRLSSQASRFVQPRLLETGTLRIALINCPNELLFCCERGFSTFSDRN) directs the protein to the mitochondrion. 15 PPR repeats span residues 87–121 (TVIDFNRLFSAIAKTKQYELVLALCKQMESKGIAH), 122–156 (SIYTLSIMINCFCRCRKLSYAFSTMGKIMKLGYEP), 157–191 (DTVIFNTLLNGLCLECRVSEALELVDRMVEMGHKP), 192–226 (TLITLNTLVNGLCLNGKVSDAVVLIDRMVETGFQP), 227–261 (NEVTYGPVLNVMCKSGQTALAMELLRKMEERNIKL), 262–296 (DAVKYSIIIDGLCKDGSLDNAFNLFNEMEIKGFKA), 297–331 (DIITYNTLIGGFCNAGRWDDGAKLLRDMIKRKISP), 332–366 (NVVTFSVLIDSFVKEGKLREADQLLKEMMQRGIAP), 367–401 (NTITYNSLIDGFCKENRLEEAIQMVDLMISKGCDP), 402–436 (DIMTFNILINGYCKANRIDDGLELFREMSLRGVIA), 437–471 (NTVTYNTLVQGFCQSGKLEVAKKLFQEMVSRRVRP), 472–506 (DIVSYKILLDGLCDNGELEKALEIFGKIEKSKMEL), 507–541 (DIGIYMIIIHGMCNASKVDDAWDLFCSLPLKGVKL), 542–576 (DARAYNIMISELCRKDSLSKADILFRKMTEEGHAP), and 577–611 (DELTYNILIRAHLGDDDATTAAELIEEMKSSGFPA).

This sequence belongs to the PPR family. P subfamily.

It is found in the mitochondrion. This is Pentatricopeptide repeat-containing protein At1g12775, mitochondrial from Arabidopsis thaliana (Mouse-ear cress).